A 437-amino-acid chain; its full sequence is GTPase Obg (437 aa).

An Obg domain is found at 2-160; it reads SMFLDTAKIS…RELQLELKIL (159 aa). Positions 127 to 146 are disordered; the sequence is GNIRFATPRNPAPEIAENGE. The OBG-type G domain occupies 161-338; the sequence is ADVGLVGFPS…LLEATAELLD (178 aa). Residues 167 to 174, 192 to 196, 214 to 217, 284 to 287, and 319 to 321 each bind GTP; these read GFPSVGKS, FTTIV, DLPG, NKMD, and SSL. Mg(2+)-binding residues include Ser174 and Thr194. The OCT domain maps to 359–437; that stretch reads GFNEEERPFE…IGNFEFEFVD (79 aa).

It belongs to the TRAFAC class OBG-HflX-like GTPase superfamily. OBG GTPase family. Monomer. Requires Mg(2+) as cofactor.

It localises to the cytoplasm. An essential GTPase which binds GTP, GDP and possibly (p)ppGpp with moderate affinity, with high nucleotide exchange rates and a fairly low GTP hydrolysis rate. Plays a role in control of the cell cycle, stress response, ribosome biogenesis and in those bacteria that undergo differentiation, in morphogenesis control. This chain is GTPase Obg, found in Streptococcus thermophilus (strain ATCC BAA-491 / LMD-9).